Here is a 174-residue protein sequence, read N- to C-terminus: Large ribosomal subunit protein uL18 (174 aa).

Belongs to the universal ribosomal protein uL18 family. As to quaternary structure, part of the 50S ribosomal subunit. Contacts the 5S and 23S rRNAs.

This is one of the proteins that bind and probably mediate the attachment of the 5S RNA into the large ribosomal subunit, where it forms part of the central protuberance. In Methanosarcina mazei (strain ATCC BAA-159 / DSM 3647 / Goe1 / Go1 / JCM 11833 / OCM 88) (Methanosarcina frisia), this protein is Large ribosomal subunit protein uL18.